A 497-amino-acid chain; its full sequence is IWS1-like protein (497 aa).

Residues 1–191 form a disordered region; the sequence is MSDHEGASPA…SDRRGGRNFE (191 aa). 2 stretches are compositionally biased toward low complexity: residues 7 to 23 and 47 to 57; these read ASPA…PVSP and PLAPRSPASPR. 3 stretches are compositionally biased toward basic and acidic residues: residues 123-134, 144-160, and 181-191; these read EGDKQQKRKDLF, DRPK…VKGD, and PSDRRGGRNFE. Residues 281 to 361 form the TFIIS N-terminal domain; the sequence is SALSEWLAPL…GEWARPIYHL (81 aa). The tract at residues 369 to 433 is disordered; that stretch reads SRQEREERDY…GDKGYINRAR (65 aa). Composition is skewed to basic and acidic residues over residues 370–382 and 401–411; these read RQER…SRMP and APKRPRIRDAE.

The protein belongs to the IWS1 family.

Its subcellular location is the nucleus. The polypeptide is IWS1-like protein (Caenorhabditis briggsae).